Reading from the N-terminus, the 1192-residue chain is DNA topoisomerase 2 (1192 aa).

ATP-binding positions include N64, N95, and 142–149 (GTNGVGLK). Mg(2+) contacts are provided by E438, D539, and D541. Residues 707–1174 (IPNFLDGMTR…PGASVWLEEI (468 aa)) enclose the Topo IIA-type catalytic domain. Y800 serves as the catalytic O-(5'-phospho-DNA)-tyrosine intermediate.

Belongs to the type II topoisomerase family. Mg(2+) serves as cofactor. The cofactor is Mn(2+). Requires Ca(2+) as cofactor.

The protein localises to the host cytoplasm. It catalyses the reaction ATP-dependent breakage, passage and rejoining of double-stranded DNA.. In terms of biological role, type II topoisomerase. Processively relaxes supercoiled DNA. Displays DNA-supercoiling activity only when associated with the viral histone-like protein. This African swine fever virus (strain Badajoz 1971 Vero-adapted) (Ba71V) protein is DNA topoisomerase 2 (TOP).